The following is a 295-amino-acid chain: Acetyl-coenzyme A carboxylase carboxyl transferase subunit beta (295 aa).

Residues 1–20 (MSWLSKLMPSGIRTENTPAK) form a disordered region. A CoA carboxyltransferase N-terminal domain is found at 28-295 (LWEKCSNCGS…QPHPQDADAA (268 aa)). Zn(2+) contacts are provided by Cys32, Cys35, Cys51, and Cys54. The C4-type zinc finger occupies 32 to 54 (CSNCGSALYGPELEENLEVCPKC).

Belongs to the AccD/PCCB family. As to quaternary structure, acetyl-CoA carboxylase is a heterohexamer composed of biotin carboxyl carrier protein (AccB), biotin carboxylase (AccC) and two subunits each of ACCase subunit alpha (AccA) and ACCase subunit beta (AccD). Requires Zn(2+) as cofactor.

Its subcellular location is the cytoplasm. It catalyses the reaction N(6)-carboxybiotinyl-L-lysyl-[protein] + acetyl-CoA = N(6)-biotinyl-L-lysyl-[protein] + malonyl-CoA. Its pathway is lipid metabolism; malonyl-CoA biosynthesis; malonyl-CoA from acetyl-CoA: step 1/1. Its function is as follows. Component of the acetyl coenzyme A carboxylase (ACC) complex. Biotin carboxylase (BC) catalyzes the carboxylation of biotin on its carrier protein (BCCP) and then the CO(2) group is transferred by the transcarboxylase to acetyl-CoA to form malonyl-CoA. This Xanthomonas campestris pv. campestris (strain B100) protein is Acetyl-coenzyme A carboxylase carboxyl transferase subunit beta.